The chain runs to 357 residues: Membrane-bound lytic murein transglycosylase C (357 aa).

An N-terminal signal peptide occupies residues 1-15; it reads MKKYLLLALLPFLYA. A lipid anchor (N-palmitoyl cysteine) is attached at Cys16. A lipid anchor (S-diacylglycerol cysteine) is attached at Cys16.

Belongs to the transglycosylase Slt family.

The protein resides in the cell outer membrane. The enzyme catalyses Exolytic cleavage of the (1-&gt;4)-beta-glycosidic linkage between N-acetylmuramic acid (MurNAc) and N-acetylglucosamine (GlcNAc) residues in peptidoglycan, from either the reducing or the non-reducing ends of the peptidoglycan chains, with concomitant formation of a 1,6-anhydrobond in the MurNAc residue.. Murein-degrading enzyme. May play a role in recycling of muropeptides during cell elongation and/or cell division. The chain is Membrane-bound lytic murein transglycosylase C from Haemophilus influenzae (strain 86-028NP).